The following is a 393-amino-acid chain: MMNKASGRSFTRSSKYLLATLIAGMMASGVSAAELVSDKALESAPTVGWASQNGFTTGGAAATSDNIYIVTNISEFTSALSAGAEAKIIQIKGTIDISGGTPYTDFADQKARSQINIPANTTVIGLGTDAKFINGSLIIDGTDGTNNVIIRNVYIQTPIDVEPHYEKGDGWNAEWDAMNITNGAHHVWIDHVTISDGNFTDDMYTTKDGETYVQHDGALDIKRGSDYVTISNSLIDQHDKTMLIGHNDTNSAQDKGKLHVTLFNNVFNRVTERAPRVRYGSIHSFNNVFKGDAKDPVYRYQYSFGIGTSGSVLSEGNSFTIANLSASKACKVVKKFNGSIFSDNGSVLNGSAVDLSGCGFSAYTSKIPYIYDVQPMTTELAQSITDNAGSGKL.

The first 32 residues, 1–32 (MMNKASGRSFTRSSKYLLATLIAGMMASGVSA), serve as a signal peptide directing secretion. Residues Glu-174, Asp-176, Asp-216, and Asp-220 each contribute to the Ca(2+) site. Residue Arg-273 is part of the active site. An intrachain disulfide couples Cys-330 to Cys-358.

The protein belongs to the polysaccharide lyase 1 family. PLADES subfamily. Ca(2+) serves as cofactor.

It is found in the secreted. The enzyme catalyses Eliminative cleavage of (1-&gt;4)-alpha-D-galacturonan to give oligosaccharides with 4-deoxy-alpha-D-galact-4-enuronosyl groups at their non-reducing ends.. It functions in the pathway glycan metabolism; pectin degradation; 2-dehydro-3-deoxy-D-gluconate from pectin: step 2/5. In terms of biological role, involved in maceration and soft-rotting of plant tissue. In Dickeya chrysanthemi (Pectobacterium chrysanthemi), this protein is Pectate lyase A (pelA).